A 539-amino-acid polypeptide reads, in one-letter code: Chaperonin GroEL 1 (539 aa).

Residues 30–33, K51, 87–91, G415, 480–482, and D496 contribute to the ATP site; these read TLGP, DGTTT, and NAA.

Belongs to the chaperonin (HSP60) family. As to quaternary structure, forms a cylinder of 14 subunits composed of two heptameric rings stacked back-to-back. Interacts with the co-chaperonin GroES.

The protein resides in the cytoplasm. The catalysed reaction is ATP + H2O + a folded polypeptide = ADP + phosphate + an unfolded polypeptide.. Together with its co-chaperonin GroES, plays an essential role in assisting protein folding. The GroEL-GroES system forms a nano-cage that allows encapsulation of the non-native substrate proteins and provides a physical environment optimized to promote and accelerate protein folding. The sequence is that of Chaperonin GroEL 1 from Bradyrhizobium sp. (strain ORS 278).